The primary structure comprises 677 residues: Methionine--tRNA ligase (677 aa).

The short motif at proline 15 to histidine 25 is the 'HIGH' region element. Zn(2+)-binding residues include cysteine 146, cysteine 149, cysteine 159, and cysteine 162. Positions lysine 333–serine 337 match the 'KMSKS' region motif. Position 336 (lysine 336) interacts with ATP. The tRNA-binding domain occupies aspartate 575–lysine 677.

This sequence belongs to the class-I aminoacyl-tRNA synthetase family. MetG type 1 subfamily. As to quaternary structure, homodimer. Requires Zn(2+) as cofactor.

Its subcellular location is the cytoplasm. The catalysed reaction is tRNA(Met) + L-methionine + ATP = L-methionyl-tRNA(Met) + AMP + diphosphate. Its function is as follows. Is required not only for elongation of protein synthesis but also for the initiation of all mRNA translation through initiator tRNA(fMet) aminoacylation. This is Methionine--tRNA ligase from Salmonella paratyphi C (strain RKS4594).